Here is an 84-residue protein sequence, read N- to C-terminus: Small ribosomal subunit protein uS17 (84 aa).

Belongs to the universal ribosomal protein uS17 family. As to quaternary structure, part of the 30S ribosomal subunit.

Its function is as follows. One of the primary rRNA binding proteins, it binds specifically to the 5'-end of 16S ribosomal RNA. The sequence is that of Small ribosomal subunit protein uS17 from Blochmanniella pennsylvanica (strain BPEN).